The following is a 557-amino-acid chain: ADP-ribosylation factor-binding protein GGA1 (557 aa).

Residues A29–P165 form the VHS domain. Residues E192–G317 enclose the GAT domain. Phosphothreonine is present on T348. Phosphoserine is present on residues S353, S357, S378, and S394. Residues A440 to T556 form the GAE domain.

Binds to ARF1 and ARF2.

It localises to the golgi apparatus. Its subcellular location is the trans-Golgi network. Its function is as follows. May play a role in the regulation of membrane traffic through the trans-Golgi network. The chain is ADP-ribosylation factor-binding protein GGA1 (GGA1) from Saccharomyces cerevisiae (strain ATCC 204508 / S288c) (Baker's yeast).